The following is a 405-amino-acid chain: Phosphopentomutase (405 aa).

Aspartate 10, aspartate 303, histidine 308, aspartate 344, histidine 345, and histidine 356 together coordinate Mn(2+).

Belongs to the phosphopentomutase family. Mn(2+) is required as a cofactor.

It localises to the cytoplasm. The catalysed reaction is 2-deoxy-alpha-D-ribose 1-phosphate = 2-deoxy-D-ribose 5-phosphate. It catalyses the reaction alpha-D-ribose 1-phosphate = D-ribose 5-phosphate. The protein operates within carbohydrate degradation; 2-deoxy-D-ribose 1-phosphate degradation; D-glyceraldehyde 3-phosphate and acetaldehyde from 2-deoxy-alpha-D-ribose 1-phosphate: step 1/2. Functionally, isomerase that catalyzes the conversion of deoxy-ribose 1-phosphate (dRib-1-P) and ribose 1-phosphate (Rib-1-P) to deoxy-ribose 5-phosphate (dRib-5-P) and ribose 5-phosphate (Rib-5-P), respectively. In Shewanella loihica (strain ATCC BAA-1088 / PV-4), this protein is Phosphopentomutase.